The chain runs to 347 residues: Phosphoribosylformylglycinamidine cyclo-ligase (347 aa).

Belongs to the AIR synthase family.

It localises to the cytoplasm. The catalysed reaction is 2-formamido-N(1)-(5-O-phospho-beta-D-ribosyl)acetamidine + ATP = 5-amino-1-(5-phospho-beta-D-ribosyl)imidazole + ADP + phosphate + H(+). It functions in the pathway purine metabolism; IMP biosynthesis via de novo pathway; 5-amino-1-(5-phospho-D-ribosyl)imidazole from N(2)-formyl-N(1)-(5-phospho-D-ribosyl)glycinamide: step 2/2. This chain is Phosphoribosylformylglycinamidine cyclo-ligase, found in Yersinia pestis.